The following is a 544-amino-acid chain: Cytochrome P450 monooxygenase cle2 (544 aa).

A helical transmembrane segment spans residues Leu19–Leu39. A disordered region spans residues Arg273–Gly305. Positions Ser280 to Lys290 are enriched in basic and acidic residues. Residues Glu291–Pro304 are compositionally biased toward acidic residues. Cys478 is a binding site for heme.

The protein belongs to the cytochrome P450 family. Heme serves as cofactor.

The protein localises to the membrane. Its pathway is secondary metabolite biosynthesis; terpenoid biosynthesis. Functionally, cytochrome P450 monooxygenase; part of the cluster A that mediates the biosynthesis of chevalone E and its oxidized derivatives that possess a unique five-membered lactone ring and can synergistically enhance the cytotoxicity of doxorubicin (DOX) in breast cancer cells. Within the pathway, cle2 is involved in hydroxylation of the chavalone E scaffold at position C-20 and contributes with cle4 to the production of seven oxidation derivatives. The molecular scaffold is commonly biosynthesized by a series of enzymes including the non-reducing polyketide synthase (NR-PKS) cle1 that produces the alpha-pyrone triacetic acid lactone (TAL); The membrane-bound prenyltransferase cle5 that accepts TAL as its substrate to perform a C-3 geranylgeranylation reaction, in which the pathway-dedicated GGPS cle6 is required to provide GGPP, the other substrate of cle5; the FAD-dependent monooxygenase Cle3 that forms an (S)-epoxide ring at the terminal olefin of the geranylgeranyl group; and the terpene cyclase Cle7 that catalyzes the cyclization of the prenyl group that yields the pentacyclic pathway intermediate chevalone E. Chevalone E can derivatize into seven new oxidized analogs by the cytochrome P450 monooxygenases cle2 (acting at C-20) and cle4 (acting at C-11 and C-12). The polypeptide is Cytochrome P450 monooxygenase cle2 (Aspergillus versicolor).